The chain runs to 93 residues: Small ribosomal subunit protein uS17 (93 aa).

Belongs to the universal ribosomal protein uS17 family. In terms of assembly, part of the 30S ribosomal subunit.

Its function is as follows. One of the primary rRNA binding proteins, it binds specifically to the 5'-end of 16S ribosomal RNA. The chain is Small ribosomal subunit protein uS17 from Corynebacterium kroppenstedtii (strain DSM 44385 / JCM 11950 / CIP 105744 / CCUG 35717).